Consider the following 196-residue polypeptide: Probable GTP-binding protein EngB (196 aa).

Residues 21 to 195 form the EngB-type G domain; the sequence is DVSEICLIGR…YELINKLLGS (175 aa). Residues 29–36, 56–60, 75–78, 142–145, and 174–176 each bind GTP; these read GRSNVGKS, GKTRL, DAPG, TKLD, and ISN. Mg(2+) is bound by residues serine 36 and threonine 58.

This sequence belongs to the TRAFAC class TrmE-Era-EngA-EngB-Septin-like GTPase superfamily. EngB GTPase family. Mg(2+) is required as a cofactor.

In terms of biological role, necessary for normal cell division and for the maintenance of normal septation. This is Probable GTP-binding protein EngB from Mycoplasma capricolum subsp. capricolum (strain California kid / ATCC 27343 / NCTC 10154).